Consider the following 465-residue polypeptide: Cysteine--tRNA ligase (465 aa).

Cysteine 30 lines the Zn(2+) pocket. A 'HIGH' region motif is present at residues 32–42 (ITVYDYCHVGH). Positions 214, 239, and 243 each coordinate Zn(2+). The 'KMSKS' region signature appears at 271–275 (KMSKS). Lysine 274 contacts ATP.

The protein belongs to the class-I aminoacyl-tRNA synthetase family. In terms of assembly, monomer. The cofactor is Zn(2+).

The protein resides in the cytoplasm. The enzyme catalyses tRNA(Cys) + L-cysteine + ATP = L-cysteinyl-tRNA(Cys) + AMP + diphosphate. The protein is Cysteine--tRNA ligase of Burkholderia multivorans (strain ATCC 17616 / 249).